The following is a 162-amino-acid chain: Beta-lactoglobulin-1 (162 aa).

Cystine bridges form between Cys-66/Cys-160 and Cys-106/Cys-119.

Belongs to the calycin superfamily. Lipocalin family. Monomer.

It localises to the secreted. In terms of biological role, lactoglobulin is the primary component of whey, it binds retinol and is probably involved in the transport of that molecule. This is Beta-lactoglobulin-1 (LGB1) from Felis catus (Cat).